The primary structure comprises 184 residues: MGNGMNKILPGLYIGNFKDARDAEQLSKNKVTHILSVHDSARPMLEGVKYLCIPAADSPSQNLTRHFKESIKFIHECRLRGESCLVHCLAGVSRSVTLVIAYIMTVTDFGWEDALHTVRAGRSCANPNVGFQRQLQEFEKHEVHQYRQWLKEEYGESPLQDAEEAKNILAAPGILKFWAFLRRL.

Residue Gly-2 is the site of N-myristoyl glycine attachment. One can recognise a Tyrosine-protein phosphatase domain in the interval 4–144 (GMNKILPGLY…LQEFEKHEVH (141 aa)). Position 58 is a phosphoserine (Ser-58). Cys-88 acts as the Phosphocysteine intermediate in catalysis. A protein is bound by residues Leu-89, Ala-90, Val-92, Ser-93, and Arg-94.

It belongs to the protein-tyrosine phosphatase family. Non-receptor class dual specificity subfamily. Monomer. Interacts with LCK; the interaction is direct. Interacts with UBR2; the interaction is direct. Myristoylation regulates subcellular location, and is necessary for activation of JNK. As to expression, ubiquitous. Highest expression seen in heart, placenta, lung, liver, kidney and pancreas.

It is found in the cytoplasm. The catalysed reaction is O-phospho-L-tyrosyl-[protein] + H2O = L-tyrosyl-[protein] + phosphate. It catalyses the reaction O-phospho-L-seryl-[protein] + H2O = L-seryl-[protein] + phosphate. The enzyme catalyses O-phospho-L-threonyl-[protein] + H2O = L-threonyl-[protein] + phosphate. Dual specificity phosphatase; can dephosphorylate both phosphotyrosine and phosphoserine or phosphothreonine residues. Activates the JNK signaling pathway. Inhibits T-cell receptor signaling and T-cell mediated immune responses, acting, at least in part, by inducing degradation of E3 ubiquitin ligase UBR2. Dephosphorylates and thereby induces 'Lys-48'-linked ubiquitination of UBR2, leading to proteasomal degradation of UBR2. Dephosphorylates and thereby inactivates tyrosine kinase LCK. Inhibits UBR2-mediated 'Lys-63'-linked ubiquitination of LCK. May play a role in B-cell receptor (BCR) signaling and B-cell function. The sequence is that of Dual specificity protein phosphatase 22 (DUSP22) from Homo sapiens (Human).